We begin with the raw amino-acid sequence, 1357 residues long: DNA-directed RNA polymerase subunit beta (1357 aa).

It belongs to the RNA polymerase beta chain family. As to quaternary structure, the RNAP catalytic core consists of 2 alpha, 1 beta, 1 beta' and 1 omega subunit. When a sigma factor is associated with the core the holoenzyme is formed, which can initiate transcription.

It catalyses the reaction RNA(n) + a ribonucleoside 5'-triphosphate = RNA(n+1) + diphosphate. In terms of biological role, DNA-dependent RNA polymerase catalyzes the transcription of DNA into RNA using the four ribonucleoside triphosphates as substrates. This chain is DNA-directed RNA polymerase subunit beta, found in Hahella chejuensis (strain KCTC 2396).